The chain runs to 318 residues: Ribose-phosphate pyrophosphokinase 2 (318 aa).

An ATP-binding site is contributed by 96 to 101 (RQDKKD). Residues Asp128, His130, Asp139, and Asp143 each coordinate Mg(2+). His130 is a binding site for ATP. The interval 212 to 227 (KDRVAILVDDMADTCG) is binding of phosphoribosylpyrophosphate.

The protein belongs to the ribose-phosphate pyrophosphokinase family. As to quaternary structure, homodimer. The active form is probably a hexamer composed of 3 homodimers. The cofactor is Mg(2+).

It catalyses the reaction D-ribose 5-phosphate + ATP = 5-phospho-alpha-D-ribose 1-diphosphate + AMP + H(+). It participates in metabolic intermediate biosynthesis; 5-phospho-alpha-D-ribose 1-diphosphate biosynthesis; 5-phospho-alpha-D-ribose 1-diphosphate from D-ribose 5-phosphate (route I): step 1/1. Its activity is regulated as follows. Activated by magnesium and inorganic phosphate. Competitively or non-competitively inhibited by ADP, 2,3-bisphosphoglyceride or GDP. Catalyzes the synthesis of phosphoribosylpyrophosphate (PRPP) that is essential for nucleotide synthesis. This Xenopus tropicalis (Western clawed frog) protein is Ribose-phosphate pyrophosphokinase 2 (prps2).